The primary structure comprises 506 residues: MNTMTLTPGQLSLSQLYDIWRHPVQLRLDASAIDGINASVACVNDIVAEGRTAYGINTGFGLLAQTRIADEDLQNLQRSLVLSHAAGVGDPLDDAMVRLIMVLKINSLARGFSGIRLSVIEALIALVNAGVYPLIPAKGSVGASGDLAPLAHLSLTLLGEGKARWQGEWLPAQTALKKAGLEPVALAAKEGLALLNGTQASTAFALRGLFEAQELFASAVVCGALTTEAVLGSRRPFDARIHAARGQQGQIDVARLFRHLLTDTSAIAESHHHCHKVQDPYSLRCQPQVMGACLTQLRQTKEVLLAEANAVSDNPLVFADAGEVISGGNFHAEPVAMVADNLALAIAEIGALSERRIALMMDKHMSQLPPFLVKNGGVNSGFMIAQVTAAALASENKALAHPHSVDSLPTSANQEDHVSMAPAAGRRLWEMAANTRGIIAVEWLAACQGIDLREGLTSSPLLEQARQTLRERVAHYTQDRFFAPDIECATALLAQGALQRLVPDFM.

The segment at residues 143 to 145 is a cross-link (5-imidazolinone (Ala-Gly)); it reads ASG. The residue at position 144 (Ser-144) is a 2,3-didehydroalanine (Ser).

This sequence belongs to the PAL/histidase family. In terms of processing, contains an active site 4-methylidene-imidazol-5-one (MIO), which is formed autocatalytically by cyclization and dehydration of residues Ala-Ser-Gly.

The protein localises to the cytoplasm. The enzyme catalyses L-histidine = trans-urocanate + NH4(+). The protein operates within amino-acid degradation; L-histidine degradation into L-glutamate; N-formimidoyl-L-glutamate from L-histidine: step 1/3. This chain is Histidine ammonia-lyase, found in Salmonella paratyphi B (strain ATCC BAA-1250 / SPB7).